The sequence spans 938 residues: Isoleucine--tRNA ligase (938 aa).

Positions 58-68 match the 'HIGH' region motif; it reads PYANGSIHIGH. N6-acetyllysine is present on Lys-183. Glu-561 is a binding site for L-isoleucyl-5'-AMP. The short motif at 602–606 is the 'KMSKS' region element; that stretch reads KMSKS. Lys-605 lines the ATP pocket. Residues Cys-901, Cys-904, Cys-921, and Cys-924 each coordinate Zn(2+).

This sequence belongs to the class-I aminoacyl-tRNA synthetase family. IleS type 1 subfamily. As to quaternary structure, monomer. It depends on Zn(2+) as a cofactor.

It localises to the cytoplasm. The enzyme catalyses tRNA(Ile) + L-isoleucine + ATP = L-isoleucyl-tRNA(Ile) + AMP + diphosphate. In terms of biological role, catalyzes the attachment of isoleucine to tRNA(Ile). As IleRS can inadvertently accommodate and process structurally similar amino acids such as valine, to avoid such errors it has two additional distinct tRNA(Ile)-dependent editing activities. One activity is designated as 'pretransfer' editing and involves the hydrolysis of activated Val-AMP. The other activity is designated 'posttransfer' editing and involves deacylation of mischarged Val-tRNA(Ile). In Escherichia coli O6:H1 (strain CFT073 / ATCC 700928 / UPEC), this protein is Isoleucine--tRNA ligase.